The following is a 396-amino-acid chain: S-adenosylmethionine synthase (396 aa).

His-16 serves as a coordination point for ATP. Residue Asp-18 coordinates Mg(2+). Glu-44 contacts K(+). The L-methionine site is built by Glu-57 and Gln-100. The tract at residues 100–110 is flexible loop; it reads QSPDIAQGVNE. Residues 175-177, 242-243, Asp-251, 257-258, Ala-274, and Lys-278 each bind ATP; these read DAK, RF, and RK. L-methionine is bound at residue Asp-251. Lys-282 contributes to the L-methionine binding site.

Belongs to the AdoMet synthase family. Homotetramer; dimer of dimers. Mg(2+) serves as cofactor. K(+) is required as a cofactor.

The protein resides in the cytoplasm. It catalyses the reaction L-methionine + ATP + H2O = S-adenosyl-L-methionine + phosphate + diphosphate. It functions in the pathway amino-acid biosynthesis; S-adenosyl-L-methionine biosynthesis; S-adenosyl-L-methionine from L-methionine: step 1/1. Catalyzes the formation of S-adenosylmethionine (AdoMet) from methionine and ATP. The overall synthetic reaction is composed of two sequential steps, AdoMet formation and the subsequent tripolyphosphate hydrolysis which occurs prior to release of AdoMet from the enzyme. This Streptococcus suis (strain 05ZYH33) protein is S-adenosylmethionine synthase.